A 466-amino-acid polypeptide reads, in one-letter code: 3-isopropylmalate dehydratase large subunit (466 aa).

3 residues coordinate [4Fe-4S] cluster: Cys347, Cys407, and Cys410.

The protein belongs to the aconitase/IPM isomerase family. LeuC type 1 subfamily. In terms of assembly, heterodimer of LeuC and LeuD. Requires [4Fe-4S] cluster as cofactor.

It carries out the reaction (2R,3S)-3-isopropylmalate = (2S)-2-isopropylmalate. The protein operates within amino-acid biosynthesis; L-leucine biosynthesis; L-leucine from 3-methyl-2-oxobutanoate: step 2/4. Its function is as follows. Catalyzes the isomerization between 2-isopropylmalate and 3-isopropylmalate, via the formation of 2-isopropylmaleate. The sequence is that of 3-isopropylmalate dehydratase large subunit from Salmonella paratyphi A (strain ATCC 9150 / SARB42).